The following is a 588-amino-acid chain: Aspartate--tRNA ligase (588 aa).

Glu-177 contacts L-aspartate. The interval 201-204 (QLFK) is aspartate. Arg-223 serves as a coordination point for L-aspartate. Residues 223–225 (RDE) and Gln-232 each bind ATP. Position 451 (His-451) interacts with L-aspartate. Residue Glu-485 coordinates ATP. Arg-492 lines the L-aspartate pocket. An ATP-binding site is contributed by 537-540 (GLDR).

This sequence belongs to the class-II aminoacyl-tRNA synthetase family. Type 1 subfamily. As to quaternary structure, homodimer.

The protein localises to the cytoplasm. It catalyses the reaction tRNA(Asp) + L-aspartate + ATP = L-aspartyl-tRNA(Asp) + AMP + diphosphate. In terms of biological role, catalyzes the attachment of L-aspartate to tRNA(Asp) in a two-step reaction: L-aspartate is first activated by ATP to form Asp-AMP and then transferred to the acceptor end of tRNA(Asp). This is Aspartate--tRNA ligase from Staphylococcus aureus (strain MRSA252).